The following is a 474-amino-acid chain: Protein FAM161A (474 aa).

Disordered stretches follow at residues 78 to 126, 185 to 210, and 308 to 364; these read SSSS…PGEI, QKRREKASDAQETREKMLKRNEDDAE, and REEL…DQGL. A coiled-coil region spans residues 188–250; that stretch reads REKASDAQET…KKTRERSKAA (63 aa). Residues 274–454 form a required for interaction with CFAP418 region; that stretch reads KLRELCRAKK…PTASSRGREQ (181 aa). The segment covering 325–335 has biased composition (polar residues); it reads LQSSPWPSHST. Residues Lys-397 and Lys-413 each participate in a glycyl lysine isopeptide (Lys-Gly) (interchain with G-Cter in SUMO2) cross-link. The segment at 412 to 474 is disordered; that stretch reads LKETRRPNPS…KELARIGGAR (63 aa). Over residues 422–431 the composition is skewed to basic residues; the sequence is PRHKSPRRSA. Residues 450-468 are compositionally biased toward basic and acidic residues; sequence RGREQAIRRSEKARMKELA.

Belongs to the FAM161 family. Interacts (via central region) with CFAP418 (via N-terminus); the interaction is direct. Interacts (via C-terminus) with microtubules. Interacts with LCA5. Interacts with CEP290. Interacts with SDCCAG8. Interacts with FAM161B. Interacts with POC1B. Interacts with CEP78. Forms a microtubule-associated complex with POC5, CETN2 and POC1B. Interacts with CCDC15. In terms of tissue distribution, expressed in the retina and kidney.

The protein resides in the cytoplasm. Its subcellular location is the cytoskeleton. It is found in the cilium basal body. The protein localises to the cell projection. It localises to the cilium. The protein resides in the microtubule organizing center. Its subcellular location is the centrosome. It is found in the centriole. In terms of biological role, involved in ciliogenesis. This Rattus norvegicus (Rat) protein is Protein FAM161A.